Consider the following 146-residue polypeptide: Large ribosomal subunit protein bL19 (146 aa).

It belongs to the bacterial ribosomal protein bL19 family.

Functionally, this protein is located at the 30S-50S ribosomal subunit interface and may play a role in the structure and function of the aminoacyl-tRNA binding site. The chain is Large ribosomal subunit protein bL19 from Bartonella quintana (strain Toulouse) (Rochalimaea quintana).